Reading from the N-terminus, the 284-residue chain is 2-dehydro-3-deoxyphosphooctonate aldolase (284 aa).

The protein belongs to the KdsA family.

It localises to the cytoplasm. The catalysed reaction is D-arabinose 5-phosphate + phosphoenolpyruvate + H2O = 3-deoxy-alpha-D-manno-2-octulosonate-8-phosphate + phosphate. It participates in carbohydrate biosynthesis; 3-deoxy-D-manno-octulosonate biosynthesis; 3-deoxy-D-manno-octulosonate from D-ribulose 5-phosphate: step 2/3. Its pathway is bacterial outer membrane biogenesis; lipopolysaccharide biosynthesis. The protein is 2-dehydro-3-deoxyphosphooctonate aldolase of Synechococcus sp. (strain ATCC 27144 / PCC 6301 / SAUG 1402/1) (Anacystis nidulans).